The primary structure comprises 505 residues: Histidine--tRNA ligase, mitochondrial (505 aa).

The N-terminal 31 residues, 1–31 (MPHLGPLRRRAWAALLGQLLRPPSTVCTRGC), are a transit peptide targeting the mitochondrion. Ser66 bears the Phosphoserine mark. Residues 130–132 (DLT), Arg157, Gln173, Asp177, Arg326, and 330–331 (YY) contribute to the L-histidine site. The residue at position 443 (Lys443) is an N6-acetyllysine.

The protein belongs to the class-II aminoacyl-tRNA synthetase family. Homodimer.

It is found in the mitochondrion. It carries out the reaction tRNA(His) + L-histidine + ATP = L-histidyl-tRNA(His) + AMP + diphosphate + H(+). Functionally, mitochondrial aminoacyl-tRNA synthetase that catalyzes the ATP-dependent ligation of histidine to the 3'-end of its cognate tRNA, via the formation of an aminoacyl-adenylate intermediate (His-AMP). The polypeptide is Histidine--tRNA ligase, mitochondrial (Hars2) (Mus musculus (Mouse)).